The sequence spans 400 residues: WD repeat and FYVE domain-containing protein 2 (400 aa).

WD repeat units follow at residues 22 to 61 (GSQE…QYWP), 66 to 105 (AMPS…NKMT), 112 to 150 (AHQS…QRLG), 153 to 192 (RTSA…CTLL), 197 to 236 (GHTG…GTAI), and 240 to 279 (GHND…QETP). Residues 281–352 (WLDSDSCQKC…VCDSCHEAIT (72 aa)) form an FYVE-type zinc finger. Zn(2+) is bound by residues Cys287, Cys290, Cys314, Cys317, Cys322, Cys325, Cys344, and Cys347. One copy of the WD 7 repeat lies at 364–399 (DSKHNIVHVHFDATRGWLLTSGTDKVIKLWDMTPVV).

In terms of assembly, homodimer. Interacts (via WD repeats 1-3) with AKT1, AKT2, PRKCZ and PRKCI. Interacts with VAMP2. Forms a complex with VAMP2 and PRKCZ. Interacts with FOXO1. Forms a complex with AKT1 and FOXO1. As to expression, highly expressed in the brain (at protein level).

It localises to the endosome. It is found in the early endosome. The protein resides in the cytoplasm. Its function is as follows. Acts in an adapter protein-like fashion to mediate the interaction between the kinase PRKCZ and its substrate VAMP2 and increases the PRKCZ-dependent phosphorylation of VAMP2. Positively regulates adipocyte differentiation, by facilitating the phosphorylation and thus inactivation of the anti-adipogenetic transcription factor FOXO1 by the kinase AKT1. Plays a role in endosomal control of AKT2 signaling; required for insulin-stimulated AKT2 phosphorylation and glucose uptake and insulin-stimulated phosphorylation of AKT2 substrates. Participates in transferrin receptor endocytosis. This is WD repeat and FYVE domain-containing protein 2 (Wdfy2) from Mus musculus (Mouse).